We begin with the raw amino-acid sequence, 204 residues long: Photosynthetic NDH subunit of subcomplex B 3, chloroplastic (204 aa).

2 disordered regions span residues 1–24 and 45–68; these read MGSV…FSHK and KTVR…DEPP. The transit peptide at 1–48 directs the protein to the chloroplast; the sequence is MGSVQLSGSGLVASLPPNHSFSHKTKLNKPNSYFFRSKHNAARTKTVR. Residues 76–180 enclose the 2Fe-2S ferredoxin-type domain; that stretch reads HSVLLPDGTP…STGLVVIQQL (105 aa). Residues cysteine 120, cysteine 126, cysteine 129, and cysteine 162 each contribute to the [2Fe-2S] cluster site.

Part of the chloroplast NDH complex, composed of a mixture of chloroplast and nucleus encoded subunits. Component of the NDH subcomplex B, at least composed of PnsB1, PnsB2, PnsB3, PnsB4 and PnsB5.

It localises to the plastid. The protein resides in the chloroplast thylakoid membrane. Functionally, NDH shuttles electrons from NAD(P)H:plastoquinone, via FMN and iron-sulfur (Fe-S) centers, to quinones in the photosynthetic chain and possibly in a chloroplast respiratory chain. The immediate electron acceptor for the enzyme in this species is believed to be plastoquinone. Couples the redox reaction to proton translocation, and thus conserves the redox energy in a proton gradient. This Arabidopsis thaliana (Mouse-ear cress) protein is Photosynthetic NDH subunit of subcomplex B 3, chloroplastic.